Consider the following 92-residue polypeptide: Large ribosomal subunit protein eL31 (92 aa).

It belongs to the eukaryotic ribosomal protein eL31 family.

The sequence is that of Large ribosomal subunit protein eL31 from Halobacterium salinarum (strain ATCC 29341 / DSM 671 / R1).